The following is a 724-amino-acid chain: Catalase-peroxidase (724 aa).

The segment at residues 98 to 226 (WHSAGSYRIA…LAAVMMGLIY (129 aa)) is a cross-link (tryptophyl-tyrosyl-methioninium (Trp-Tyr) (with M-252)). His-99 functions as the Proton acceptor in the catalytic mechanism. The tryptophyl-tyrosyl-methioninium (Tyr-Met) (with W-98) cross-link spans 226-252 (YVNPEGVDGHPDPQKTANDVRVTFARM). A heme b-binding site is contributed by His-267.

The protein belongs to the peroxidase family. Peroxidase/catalase subfamily. Homodimer or homotetramer. Heme b serves as cofactor. Formation of the three residue Trp-Tyr-Met cross-link is important for the catalase, but not the peroxidase activity of the enzyme.

The catalysed reaction is H2O2 + AH2 = A + 2 H2O. The enzyme catalyses 2 H2O2 = O2 + 2 H2O. Bifunctional enzyme with both catalase and broad-spectrum peroxidase activity. The protein is Catalase-peroxidase of Edwardsiella tarda.